Here is a 146-residue protein sequence, read N- to C-terminus: Snaclec rhodocytin subunit beta (146 aa).

A signal peptide spans 1–23 (MGRFIFVSFGLLVVFLSLSGTGA). 3 disulfides stabilise this stretch: C25-C36, C53-C142, and C119-C134. The 112-residue stretch at 32-143 (YEGHCYKPFN…CSSTCSFVCK (112 aa)) folds into the C-type lectin domain.

This sequence belongs to the snaclec family. Dimer (non-covalently linked) of heterodimers of subunits alpha and beta (disulfide-linked). As to expression, expressed by the venom gland.

The protein resides in the secreted. Its function is as follows. Elicits platelet aggregation by the binding to the C-type lectin domain family 1 member B (CLEC1B/CLEC2). Binding leads to tyrosine phosphorylation in the cytoplasmic tail of CLEC1B, which promotes the binding of spleen tyrosine kinase (Syk), subsequent activation of PLCgamma2, and platelet activation and aggregation. Binding to GPIbalpha (GP1BA) and alpha2/beta-1 (ITGA2/ITGB1) may also induce aggregation, but this is controversial. The sequence is that of Snaclec rhodocytin subunit beta from Calloselasma rhodostoma (Malayan pit viper).